The primary structure comprises 285 residues: MSKGIKMHNSVMRLTIPNKKIINYAPHIVTSIILFFICQQLAQLTWKIILPVNFTDNALSSADMTSPAAPSAETALPRFTLFGLAEKTSASAPGGNLDQAPVSALRLRVTGLLASTDPSRAIAIMMKGNQQVSLGIGDNTPGGEAKIIAISPDRLIVNYRGRNEAIPLFNDPPAVGKNSAAPPARHLAQELRAQPQNILHYLNISPVMVNDKLSGYRLNPGKDPALFRQSGLRENDLAIALNGLDLRDKEQARQVLAQLPELTEITLTVERDGQKNDIYLALRDE.

At Met1 to His27 the chain is on the cytoplasmic side. A helical membrane pass occupies residues Ile28–Trp46. Residues Lys47–Glu285 lie on the Periplasmic side of the membrane.

This sequence belongs to the GSP C family.

It is found in the cell inner membrane. Functionally, involved in a type II secretion system (T2SS, formerly general secretion pathway, GSP) for the export of proteins. Required for the translocation of pullulanase. This Klebsiella pneumoniae protein is Type II secretion system protein C (pulC).